A 459-amino-acid chain; its full sequence is MENTTVINIYCADKFFQTTYSTIKKCNFLTSKLIDNEIRLNIDPIHIEYLLNYLRGYLLDELCMEKIGYMIDVLPNHITINVGGKYYYLDRDFLCEYLEYFKVFTEYNKHLDPDYSSVLIDRSYVMFDKILEYNQKSTNIELYNFIKQELEFYLFKKEHLTNNQISSETKRQSIELSELPISKITNYEFIKYITKKTKTGNIVYKSIHENHYYHYCNSKILTHENTIILIKLNGSNIEQLLHNIVSFKRDYCDHTKQEDITISKLFQKKIAVHDKSNNLIIMDIELNDKDITIDFNYFNDGSVYIFHPINLINSEKTFFKKICKRVCQTITCRHNINMVKINITDFIEKITCNREKCVYIFDKIYFVIPNHNVSINYVELISSDFGNLTTSELLPSKTNPNKFMIKTLQTANKNIRFNICVDAIHRYSRNYLEIYYDLKQPVNTDINIMYKYHIIKQSY.

Residues 76 to 143 form the BTB domain; that stretch reads NHITINVGGK…NQKSTNIELY (68 aa).

This sequence belongs to the mimivirus BTB/WD family.

This chain is Putative BTB/POZ domain-containing protein R541, found in Acanthamoeba polyphaga mimivirus (APMV).